A 907-amino-acid chain; its full sequence is DNA mismatch repair protein MutS (907 aa).

G656–S663 provides a ligand contact to ATP.

The protein belongs to the DNA mismatch repair MutS family.

Its function is as follows. This protein is involved in the repair of mismatches in DNA. It is possible that it carries out the mismatch recognition step. This protein has a weak ATPase activity. This Nitrobacter hamburgensis (strain DSM 10229 / NCIMB 13809 / X14) protein is DNA mismatch repair protein MutS.